The following is a 125-amino-acid chain: Small ribosomal subunit protein eS8 (125 aa).

A disordered region spans residues 1–20 (MLWQGESIRKVTGGRRRPAQ).

It belongs to the eukaryotic ribosomal protein eS8 family. As to quaternary structure, part of the 30S ribosomal subunit.

This chain is Small ribosomal subunit protein eS8, found in Methanoregula boonei (strain DSM 21154 / JCM 14090 / 6A8).